A 240-amino-acid polypeptide reads, in one-letter code: MSKAGGNKGGVKTGGRGGAGSSNLQVRVKKKAGTIKESSRRWLQRHLNDPYVHKSRQDGYRSRAAYKLIEINDRYDLLKKGQKIIDLGAAPGGWSQIAAKIVGSTDENPHVVGIDYLHVDPLPGVVLLEMDFLDDEAPQKLMDALGDKPDLVISDMAAPTTGHRRTDHLRTVHLCEVAADFAISVLKPGGHFLTKTFQGGTENELLALLKQKFRSVHHVKPPASRAESVELYLLARDFKG.

The span at 1–20 (MSKAGGNKGGVKTGGRGGAG) shows a compositional bias: gly residues. Positions 1–27 (MSKAGGNKGGVKTGGRGGAGSSNLQVR) are disordered. S-adenosyl-L-methionine contacts are provided by G92, W94, D115, D131, and D155. Residue K195 is the Proton acceptor of the active site.

This sequence belongs to the class I-like SAM-binding methyltransferase superfamily. RNA methyltransferase RlmE family.

It is found in the cytoplasm. It catalyses the reaction uridine(2552) in 23S rRNA + S-adenosyl-L-methionine = 2'-O-methyluridine(2552) in 23S rRNA + S-adenosyl-L-homocysteine + H(+). Its function is as follows. Specifically methylates the uridine in position 2552 of 23S rRNA at the 2'-O position of the ribose in the fully assembled 50S ribosomal subunit. This is Ribosomal RNA large subunit methyltransferase E from Brucella anthropi (strain ATCC 49188 / DSM 6882 / CCUG 24695 / JCM 21032 / LMG 3331 / NBRC 15819 / NCTC 12168 / Alc 37) (Ochrobactrum anthropi).